The primary structure comprises 155 residues: Deoxyuridine 5'-triphosphate nucleotidohydrolase (155 aa).

Substrate is bound by residues 71–73 (RSG), Asn-84, 88–90 (TID), and Lys-98.

The protein belongs to the dUTPase family. The cofactor is Mg(2+).

The catalysed reaction is dUTP + H2O = dUMP + diphosphate + H(+). It participates in pyrimidine metabolism; dUMP biosynthesis; dUMP from dCTP (dUTP route): step 2/2. Functionally, this enzyme is involved in nucleotide metabolism: it produces dUMP, the immediate precursor of thymidine nucleotides and it decreases the intracellular concentration of dUTP so that uracil cannot be incorporated into DNA. This Corynebacterium jeikeium (strain K411) protein is Deoxyuridine 5'-triphosphate nucleotidohydrolase.